Here is a 984-residue protein sequence, read N- to C-terminus: Mineralocorticoid receptor (984 aa).

Positions 1–602 (METKGYHSLP…STGSSRPSKI (602 aa)) are modulating. The span at 231-243 (QGTPLTCSPNVEN) shows a compositional bias: polar residues. 2 disordered regions span residues 231–329 (QGTP…AAST) and 346–369 (SGTS…EKGA). Phosphoserine is present on residues Ser250, Ser259, Ser283, Ser287, and Ser299. Over residues 259-291 (SPLSSPLSSMKSSISSPPSHCSVKSPVSSPNNV) the composition is skewed to low complexity. Residues 292–329 (TLRSSVSSPANINNSRCSVSSPSNTNNRSTLSSPAAST) show a composition bias toward polar residues. Positions 346–355 (SGTSAGSSTS) are enriched in low complexity. Residues Cys603, Cys606, Cys620, Cys623, Cys639, Cys645, Cys655, and Cys658 each contribute to the Zn(2+) site. 2 NR C4-type zinc fingers span residues 603-623 (CLVC…CGSC) and 639-663 (CAGR…LQKC). A DNA-binding region (nuclear receptor) is located at residues 603 to 668 (CLVCGDEASG…RLQKCLQAGM (66 aa)). Residues 669–725 (NLGARKSKKLGKLKGIHEEQPQQQQPPPPPPPPQSPEEGTTYIAPAKEPSVNTALVP) are hinge. The interval 684 to 710 (IHEEQPQQQQPPPPPPPPQSPEEGTTY) is disordered. Residues 692 to 703 (QQPPPPPPPPQS) are compositionally biased toward pro residues. Residues 726-964 (QLSTISRALT…EFPAMLVEII (239 aa)) enclose the NR LBD domain. Positions 770 and 776 each coordinate 21-hydroxyprogesterone. 2 residues coordinate aldosterone: Asn770 and Gln776. Progesterone contacts are provided by Asn770 and Gln776. Residues 782 to 785 (KWAK) are important for coactivator binding. The 21-hydroxyprogesterone site is built by Arg817 and Thr945. Aldosterone contacts are provided by Arg817 and Thr945. Residues Arg817 and Thr945 each coordinate progesterone.

This sequence belongs to the nuclear hormone receptor family. NR3 subfamily. As to quaternary structure, heteromultimeric cytoplasmic complex with HSP90, HSP70, and FKBP4, in the absence of ligand. After ligand binding, it translocates to the nucleus and binds to DNA as a homodimer and as a heterodimer with NR3C1. Binds the coactivator NCOA2. May interact with HSD11B2 in the absence of ligand. Binds the coactivators NCOA1, TIF1 and NRIP1. In terms of processing, phosphorylated.

The protein resides in the cytoplasm. It localises to the nucleus. Its subcellular location is the endoplasmic reticulum membrane. Receptor for both mineralocorticoids (MC) such as aldosterone and glucocorticoids (GC) such as corticosterone or cortisol. Binds to mineralocorticoid response elements (MRE) and transactivates target genes. The effect of MC is to increase ion and water transport and thus raise extracellular fluid volume and blood pressure and lower potassium levels. The polypeptide is Mineralocorticoid receptor (NR3C2) (Aotus nancymaae (Ma's night monkey)).